A 326-amino-acid polypeptide reads, in one-letter code: tRNA-dihydrouridine(20/20a) synthase (326 aa).

FMN is bound by residues 11 to 13 and Q63; that span reads PML. The active-site Proton donor is C93. Residues K132, H165, 205-207, and 227-228 contribute to the FMN site; these read NGG and GR.

Belongs to the Dus family. DusA subfamily. Requires FMN as cofactor.

The enzyme catalyses 5,6-dihydrouridine(20) in tRNA + NADP(+) = uridine(20) in tRNA + NADPH + H(+). It carries out the reaction 5,6-dihydrouridine(20) in tRNA + NAD(+) = uridine(20) in tRNA + NADH + H(+). It catalyses the reaction 5,6-dihydrouridine(20a) in tRNA + NADP(+) = uridine(20a) in tRNA + NADPH + H(+). The catalysed reaction is 5,6-dihydrouridine(20a) in tRNA + NAD(+) = uridine(20a) in tRNA + NADH + H(+). Catalyzes the synthesis of 5,6-dihydrouridine (D), a modified base found in the D-loop of most tRNAs, via the reduction of the C5-C6 double bond in target uridines. Specifically modifies U20 and U20a in tRNAs. This chain is tRNA-dihydrouridine(20/20a) synthase, found in Vibrio parahaemolyticus serotype O3:K6 (strain RIMD 2210633).